The primary structure comprises 308 residues: Ribonuclease HIII (308 aa).

An RNase H type-2 domain is found at 93 to 308 (MSVLGSDETG…ANTEKARKMI (216 aa)). Aspartate 99, glutamate 100, and aspartate 204 together coordinate a divalent metal cation.

Belongs to the RNase HII family. RnhC subfamily. The cofactor is Mn(2+). Mg(2+) serves as cofactor.

The protein resides in the cytoplasm. It carries out the reaction Endonucleolytic cleavage to 5'-phosphomonoester.. In terms of biological role, endonuclease that specifically degrades the RNA of RNA-DNA hybrids. This chain is Ribonuclease HIII, found in Lysinibacillus sphaericus (strain C3-41).